The primary structure comprises 349 residues: S-adenosylmethionine:tRNA ribosyltransferase-isomerase (349 aa).

The protein belongs to the QueA family. As to quaternary structure, monomer.

The protein resides in the cytoplasm. The catalysed reaction is 7-aminomethyl-7-carbaguanosine(34) in tRNA + S-adenosyl-L-methionine = epoxyqueuosine(34) in tRNA + adenine + L-methionine + 2 H(+). It participates in tRNA modification; tRNA-queuosine biosynthesis. In terms of biological role, transfers and isomerizes the ribose moiety from AdoMet to the 7-aminomethyl group of 7-deazaguanine (preQ1-tRNA) to give epoxyqueuosine (oQ-tRNA). The sequence is that of S-adenosylmethionine:tRNA ribosyltransferase-isomerase from Flavobacterium psychrophilum (strain ATCC 49511 / DSM 21280 / CIP 103535 / JIP02/86).